The sequence spans 130 residues: Large ribosomal subunit protein bL12 (130 aa).

Belongs to the bacterial ribosomal protein bL12 family. As to quaternary structure, homodimer. Part of the ribosomal stalk of the 50S ribosomal subunit. Forms a multimeric L10(L12)X complex, where L10 forms an elongated spine to which 2 to 4 L12 dimers bind in a sequential fashion. Binds GTP-bound translation factors.

In terms of biological role, forms part of the ribosomal stalk which helps the ribosome interact with GTP-bound translation factors. Is thus essential for accurate translation. This chain is Large ribosomal subunit protein bL12, found in Herpetosiphon aurantiacus (strain ATCC 23779 / DSM 785 / 114-95).